We begin with the raw amino-acid sequence, 636 residues long: Probable potassium transport system protein Kup (636 aa).

Transmembrane regions (helical) follow at residues 22-42 (LGLLVAAVGVVYGDIGTSPLY), 64-84 (ILSLILWSLLWVVSFKYVMFI), 115-135 (LMVICGLIGASLFYGDSMITP), 150-170 (FDGIDHWVVPISLVVLVALFL), 182-202 (LFGPIMVTWFVVLGALGVHGI), 220-240 (FFVVHPGMGVAILGAVVLALT), 261-281 (WFILVLPALVLNYFGQGALLL), 293-313 (LLAPSWALLPLVGLATMATVI), 351-371 (IYIGAVNWTLMVGVVLLVIGF), 383-403 (VAVTGTMLMTTILVSAVMLLL), 408-428 (PVLAVPLLMGFLFVDGLFFAA), and 433-453 (IVQGGAFPVLAGGVLFLLMST).

The protein belongs to the HAK/KUP transporter (TC 2.A.72) family.

It localises to the cell inner membrane. The catalysed reaction is K(+)(in) + H(+)(in) = K(+)(out) + H(+)(out). Transport of potassium into the cell. Likely operates as a K(+):H(+) symporter. This Pseudomonas putida (strain GB-1) protein is Probable potassium transport system protein Kup.